Consider the following 377-residue polypeptide: uncharacterized protein (377 aa).

Helical transmembrane passes span 21-41 (WLLAIPLLISLTLLTYGLVLF), 66-86 (LVTFVVASVVFALTVALFGLG), 163-183 (IGVLISLNLALSMVEIPGIVL), 197-217 (AILFIAIRFVGLLSTSLIAII), 236-256 (FYMGNDLVVLWIFYFFYYHIF), 292-312 (VNLICGFIEGLGFYVGYFLIL), and 339-359 (IYFLLTTTTIFSLKYLFELLF).

It is found in the cell membrane. This is an uncharacterized protein from Mycoplasma pneumoniae (strain ATCC 29342 / M129 / Subtype 1) (Mycoplasmoides pneumoniae).